Consider the following 104-residue polypeptide: L-rhamnose mutarotase (104 aa).

Tyr-18 is a binding site for substrate. His-22 serves as the catalytic Proton donor. Residues Tyr-41 and 76–77 (WW) contribute to the substrate site.

This sequence belongs to the rhamnose mutarotase family. In terms of assembly, homodimer.

The protein resides in the cytoplasm. The enzyme catalyses alpha-L-rhamnose = beta-L-rhamnose. Its pathway is carbohydrate metabolism; L-rhamnose metabolism. In terms of biological role, involved in the anomeric conversion of L-rhamnose. The sequence is that of L-rhamnose mutarotase from Phocaeicola vulgatus (strain ATCC 8482 / DSM 1447 / JCM 5826 / CCUG 4940 / NBRC 14291 / NCTC 11154) (Bacteroides vulgatus).